The sequence spans 121 residues: UPF0102 protein AAur_2443 (121 aa).

The protein belongs to the UPF0102 family.

The sequence is that of UPF0102 protein AAur_2443 from Paenarthrobacter aurescens (strain TC1).